The chain runs to 746 residues: Ferric enterobactin receptor (746 aa).

Positions 1-25 (MSSRALPAVPFLLLSSCLLANAVHA) are cleaved as a signal peptide. Residues 39–44 (QTVVAT) carry the TonB box motif. Residues 47 to 174 (EETKQAPGVS…AGGVVNIITK (128 aa)) enclose the TBDR plug domain. Disordered regions lie at residues 82–102 (VNLT…IDIR), 235–254 (GHES…GREG), and 397–424 (QKLD…KNRS). Positions 84–98 (LTGNSSSGQRGNNRQ) are enriched in polar residues. Residues 179–746 (ETHGNLSVYS…TFYTSLTASF (568 aa)) enclose the TBDR beta-barrel domain. Over residues 402-411 (PSSNTQNTEE) the composition is skewed to polar residues. Residues 729–746 (ATYNEPGRTFYTSLTASF) carry the TonB C-terminal box motif.

Belongs to the TonB-dependent receptor family.

It is found in the cell outer membrane. In terms of biological role, specific receptor for the siderophore ferric enterobactin. The polypeptide is Ferric enterobactin receptor (pfeA) (Pseudomonas aeruginosa (strain ATCC 15692 / DSM 22644 / CIP 104116 / JCM 14847 / LMG 12228 / 1C / PRS 101 / PAO1)).